A 606-amino-acid polypeptide reads, in one-letter code: CDPK-related kinase 8 (606 aa).

Over residues methionine 1–arginine 14 the composition is skewed to polar residues. The disordered stretch occupies residues methionine 1–glutamate 132. Glycine 2 carries the N-myristoyl glycine lipid modification. The span at lysine 98–lysine 110 shows a compositional bias: basic residues. The region spanning valine 150–isoleucine 412 is the Protein kinase domain. ATP-binding positions include isoleucine 156–threonine 164 and lysine 182. The active-site Proton acceptor is aspartate 278. Serine 318 bears the Phosphoserine mark. The autoinhibitory domain stretch occupies residues aspartate 418 to leucine 448. The interval serine 437–isoleucine 457 is calmodulin binding (CaMBD). EF-hand domains lie at aspartate 455 to alanine 491, methionine 492 to histidine 527, glutamate 528 to isoleucine 567, and histidine 570 to arginine 599. The Ca(2+) site is built by asparagine 470, aspartate 472, glutamate 516, aspartate 545, asparagine 547, asparagine 549, glutamate 556, aspartate 581, and lysine 583. A Phosphoserine modification is found at serine 585.

Belongs to the protein kinase superfamily. Ser/Thr protein kinase family. CDPK subfamily. As to quaternary structure, binds calmodulin (CaM) in a calcium-dependent manner. Post-translationally, autophosphorylated.

Its subcellular location is the membrane. It catalyses the reaction L-seryl-[protein] + ATP = O-phospho-L-seryl-[protein] + ADP + H(+). It carries out the reaction L-threonyl-[protein] + ATP = O-phospho-L-threonyl-[protein] + ADP + H(+). With respect to regulation, activated by calcium and calmodulin. Autophosphorylation may play an important role in the regulation of the kinase activity. Its function is as follows. May play a role in signal transduction pathways that involve calcium as a second messenger. This chain is CDPK-related kinase 8 (CRK8), found in Arabidopsis thaliana (Mouse-ear cress).